The following is a 579-amino-acid chain: V-type ATP synthase alpha chain (579 aa).

Position 227–234 (227–234 (GGFGTGKT)) interacts with ATP.

The protein belongs to the ATPase alpha/beta chains family.

It carries out the reaction ATP + H2O + 4 H(+)(in) = ADP + phosphate + 5 H(+)(out). Produces ATP from ADP in the presence of a proton gradient across the membrane. The V-type alpha chain is a catalytic subunit. The polypeptide is V-type ATP synthase alpha chain (Anaeromyxobacter dehalogenans (strain 2CP-C)).